Here is a 317-residue protein sequence, read N- to C-terminus: MATH domain and coiled-coil domain-containing protein At3g58240 (317 aa).

One can recognise an MATH domain in the interval 6–131 (DNKFTWVIKN…DGEVEIVAQI (126 aa)). Residues 254 to 305 (KLDWLEKKLDEVKEIKKKCERVTEMEKELHDLMNKHTNVSKLLEKEKLEIKN) adopt a coiled-coil conformation.

The protein is MATH domain and coiled-coil domain-containing protein At3g58240 of Arabidopsis thaliana (Mouse-ear cress).